The following is a 217-amino-acid chain: 3,4-dihydroxy-2-butanone 4-phosphate synthase (217 aa).

Residues 37 to 38, Asp42, 150 to 154, and Glu174 contribute to the D-ribulose 5-phosphate site; these read RE and RGGHT. Glu38 serves as a coordination point for Mg(2+). His153 is a Mg(2+) binding site.

This sequence belongs to the DHBP synthase family. Homodimer. Requires Mg(2+) as cofactor. The cofactor is Mn(2+).

The enzyme catalyses D-ribulose 5-phosphate = (2S)-2-hydroxy-3-oxobutyl phosphate + formate + H(+). The protein operates within cofactor biosynthesis; riboflavin biosynthesis; 2-hydroxy-3-oxobutyl phosphate from D-ribulose 5-phosphate: step 1/1. Its function is as follows. Catalyzes the conversion of D-ribulose 5-phosphate to formate and 3,4-dihydroxy-2-butanone 4-phosphate. This is 3,4-dihydroxy-2-butanone 4-phosphate synthase from Klebsiella pneumoniae subsp. pneumoniae (strain ATCC 700721 / MGH 78578).